The sequence spans 144 residues: Bacilliredoxin BCE_4227 (144 aa).

This sequence belongs to the bacilliredoxin family.

This is Bacilliredoxin BCE_4227 from Bacillus cereus (strain ATCC 10987 / NRS 248).